A 137-amino-acid chain; its full sequence is uncharacterized protein (137 aa).

Transmembrane regions (helical) follow at residues 14 to 34 (AVVV…GSIS), 48 to 68 (YHII…SLSI), 84 to 104 (FFTI…LGLT), and 109 to 129 (HIPS…LNLF).

Its subcellular location is the cell membrane. This is an uncharacterized protein from Methanocaldococcus jannaschii (strain ATCC 43067 / DSM 2661 / JAL-1 / JCM 10045 / NBRC 100440) (Methanococcus jannaschii).